A 31-amino-acid polypeptide reads, in one-letter code: Cyclotide cter-D (31 aa).

The cyclopeptide (Gly-Asn) cross-link spans 1 to 31 (GIPCAESCVWIPCTVTALLGCSCKDKVCYLN). Cystine bridges form between cysteine 4-cysteine 21, cysteine 8-cysteine 23, and cysteine 13-cysteine 28.

Contains 3 disulfide bonds. Post-translationally, this is a cyclic peptide. As to expression, expressed in root, seed and nodule but not in flower, stem, shoot, leaf and pod.

Probably participates in a plant defense mechanism. In Clitoria ternatea (Butterfly pea), this protein is Cyclotide cter-D.